A 249-amino-acid chain; its full sequence is 1-(5-phosphoribosyl)-5-[(5-phosphoribosylamino)methylideneamino] imidazole-4-carboxamide isomerase (249 aa).

Asp8 acts as the Proton acceptor in catalysis. Catalysis depends on Asp129, which acts as the Proton donor.

Belongs to the HisA/HisF family.

The protein resides in the cytoplasm. The enzyme catalyses 1-(5-phospho-beta-D-ribosyl)-5-[(5-phospho-beta-D-ribosylamino)methylideneamino]imidazole-4-carboxamide = 5-[(5-phospho-1-deoxy-D-ribulos-1-ylimino)methylamino]-1-(5-phospho-beta-D-ribosyl)imidazole-4-carboxamide. It participates in amino-acid biosynthesis; L-histidine biosynthesis; L-histidine from 5-phospho-alpha-D-ribose 1-diphosphate: step 4/9. The protein is 1-(5-phosphoribosyl)-5-[(5-phosphoribosylamino)methylideneamino] imidazole-4-carboxamide isomerase of Nitratidesulfovibrio vulgaris (strain ATCC 29579 / DSM 644 / CCUG 34227 / NCIMB 8303 / VKM B-1760 / Hildenborough) (Desulfovibrio vulgaris).